Here is a 266-residue protein sequence, read N- to C-terminus: Ciliary microtubule inner protein 4 (266 aa).

Polar residues-rich tracts occupy residues 1–15 (MELS…LTRT) and 24–38 (QDMN…SLDN). Residues 1 to 124 (MELSHRQGTT…SPEQRTVPLS (124 aa)) are disordered. Low complexity predominate over residues 47 to 63 (LSQSPLGSSLGQGYLET). Positions 81–102 (HPEDLKKGASRSSSRDARETFR) are enriched in basic and acidic residues.

As to expression, only detected in testis, in the spermatids and sperm within the seminiferous tubules (at protein level).

Its subcellular location is the cytoplasmic vesicle. It localises to the secretory vesicle. The protein resides in the acrosome. It is found in the cell projection. The protein localises to the cilium. Its subcellular location is the flagellum. Its function is as follows. Seems to be associated with spermiogenesis but is not essential for sperm development and male fertility. The polypeptide is Ciliary microtubule inner protein 4 (Cimip4) (Mus musculus (Mouse)).